Consider the following 409-residue polypeptide: Beta-arrestin-2 (409 aa).

Position 48 is a phosphotyrosine (tyrosine 48). A hydroxyproline; by PHD2 mark is found at proline 176 and proline 181. An interaction with TRAF6 region spans residues 240-409 (ADICLFSTAQ…KDDDYDDQLC (170 aa)). The residue at position 360 (serine 360) is a Phosphoserine. Residues 363 to 409 (PETDVPVDTNLIEFDTNYATDDDIVFEDFARLRLKGMKDDDYDDQLC) form an interaction with AP2B1 region. Threonine 382 bears the Phosphothreonine mark. A [DE]-X(1,2)-F-X-X-[FL]-X-X-X-R motif motif is present at residues 385–395 (DIVFEDFARLR).

This sequence belongs to the arrestin family. As to quaternary structure, homooligomer; the self-association is mediated by InsP6-binding. Heterooligomer with ARRB1; the association is mediated by InsP6-binding. Interacts with ADRB2 and CHRM2. Interacts with PDE4A. Interacts with PDE4D. Interacts with MAPK10, MAPK1 and MAPK3. Interacts with DRD2. Interacts with FSHR. Interacts with CLTC. Interacts with HTR2C. Interacts with CCR5. Interacts with CXCR4. Interacts with SRC. Interacts with DUSP16; the interaction is interrupted by stimulation of AGTR1 and activation of MAPK10. Interacts with CHUK; the interaction is enhanced stimulation of ADRB2. Interacts with RELA. Interacts with MDM2; the interaction is enhanced by activation of GPCRs. Interacts with SLC9A5. Interacts with TRAF6. Interacts with IGF1R. Interacts with ENG. Interacts with KIR2DL1, KIR2DL3 and KIR2DL4. Interacts with LDLR. Interacts with AP2B1. Interacts with C5AR1. Interacts with RAF1. Interacts with MAP2K1. Interacts with MAPK1. Interacts with MAPK10; the interaction enhances MAPK10 activation by MAP3K5. Interacts with MAP2K4; the interaction is enhanced by presence of MAP3K5 and MAPK10. Interacts with MAP3K5. Interacts with AKT1. Interacts with IKBKB and MAP3K14. Interacts with SMO (activated). Interacts with GSK3A and GSK3B. Associates with protein phosphatase 2A (PP2A). Interacts with DHX8; the interaction is detected in the nucleus upon OR1D2 stimulation. Interacts with GAPDHS; the interaction is detected in the nucleus upon OR1D2 stimulation. Interacts with H2AFX; the interaction is detected in the nucleus upon OR1D2 stimulation. Interacts with KIF14; the interaction is detected in the nucleus upon OR1D2 stimulation. Interacts with RCC1; the interaction is detected in the nucleus upon OR1D2 stimulation. Interacts with CXCR4; the interaction is dependent on C-terminal phosphorylation of CXCR4 and allows activation of MAPK1 and MAPK3. Interacts with GPR143. Interacts with HCK and CXCR1 (phosphorylated). Interacts with ACKR3 and ACKR4. Interacts with ARRDC1; the interaction is direct. Interacts with GPR61, GPR62 and GPR135. Interacts (via NACHT and LRR domains) with NLRP3; this interaction is direct and inducible by omega-3 polyunsaturated fatty acids (PUFAs). Interacts with FFAR4 (via C-terminus); this interaction is stimulated by long-chain fatty acids (LCFAs). Interacts with GPR35. Interacts with GPR84. Interacts with TIGIT; this interaction inhibits the NF-kappa-B pathway. Interacts with TGFBR3. In terms of processing, phosphorylated at Thr-382 in the cytoplasm; probably dephosphorylated at the plasma membrane. The phosphorylation does not regulate internalization and recycling of ADRB2, interaction with clathrin or AP2B1. The ubiquitination status appears to regulate the formation and trafficking of beta-arrestin-GPCR complexes and signaling. Ubiquitination appears to occur GPCR-specific. Ubiquitinated by MDM2; the ubiquitination is required for rapid internalization of ADRB2. Deubiquitinated by USP33; the deubiquitination leads to a dissociation of the beta-arrestin-GPCR complex. Stimulation of a class A GPCR, such as ADRB2, induces transient ubiquitination and subsequently promotes association with USP33. Stimulation of a class B GPCR promotes a sustained ubiquitination. Deubiquitinated by USP20; allowing USP20 to deubiquitinate TRAF6 leading to inhibition of NF-kappa-B signaling. Post-translationally, hydroxylation by PHD2 modulates the rate of internalization by slowing down recruitment to the plasma membrane and inhibiting subsequent co-internalization with class A receptors.

The protein localises to the cytoplasm. It localises to the nucleus. Its subcellular location is the cell membrane. The protein resides in the membrane. It is found in the clathrin-coated pit. The protein localises to the cytoplasmic vesicle. In terms of biological role, functions in regulating agonist-mediated G-protein coupled receptor (GPCR) signaling by mediating both receptor desensitization and resensitization processes. During homologous desensitization, beta-arrestins bind to the GPRK-phosphorylated receptor and sterically preclude its coupling to the cognate G-protein; the binding appears to require additional receptor determinants exposed only in the active receptor conformation. The beta-arrestins target many receptors for internalization by acting as endocytic adapters (CLASPs, clathrin-associated sorting proteins) and recruiting the GPRCs to the adapter protein 2 complex 2 (AP-2) in clathrin-coated pits (CCPs). However, the extent of beta-arrestin involvement appears to vary significantly depending on the receptor, agonist and cell type. Internalized arrestin-receptor complexes traffic to intracellular endosomes, where they remain uncoupled from G-proteins. Two different modes of arrestin-mediated internalization occur. Class A receptors, like ADRB2, OPRM1, ENDRA, D1AR and ADRA1B dissociate from beta-arrestin at or near the plasma membrane and undergo rapid recycling. Class B receptors, like AVPR2, AGTR1, NTSR1, TRHR and TACR1 internalize as a complex with arrestin and traffic with it to endosomal vesicles, presumably as desensitized receptors, for extended periods of time. Receptor resensitization then requires that receptor-bound arrestin is removed so that the receptor can be dephosphorylated and returned to the plasma membrane. Mediates endocytosis of CCR7 following ligation of CCL19 but not CCL21. Involved in internalization of P2RY1, P2RY4, P2RY6 and P2RY11 and ATP-stimulated internalization of P2RY2. Involved in phosphorylation-dependent internalization of OPRD1 and subsequent recycling or degradation. Involved in ubiquitination of IGF1R. Beta-arrestins function as multivalent adapter proteins that can switch the GPCR from a G-protein signaling mode that transmits short-lived signals from the plasma membrane via small molecule second messengers and ion channels to a beta-arrestin signaling mode that transmits a distinct set of signals that are initiated as the receptor internalizes and transits the intracellular compartment. Acts as a signaling scaffold for MAPK pathways such as MAPK1/3 (ERK1/2) and MAPK10 (JNK3). ERK1/2 and JNK3 activated by the beta-arrestin scaffold are largely excluded from the nucleus and confined to cytoplasmic locations such as endocytic vesicles, also called beta-arrestin signalosomes. Acts as a signaling scaffold for the AKT1 pathway. GPCRs for which the beta-arrestin-mediated signaling relies on both ARRB1 and ARRB2 (codependent regulation) include ADRB2, F2RL1 and PTH1R. For some GPCRs the beta-arrestin-mediated signaling relies on either ARRB1 or ARRB2 and is inhibited by the other respective beta-arrestin form (reciprocal regulation). Increases ERK1/2 signaling in AGTR1- and AVPR2-mediated activation (reciprocal regulation). Involved in CCR7-mediated ERK1/2 signaling involving ligand CCL19. Is involved in type-1A angiotensin II receptor/AGTR1-mediated ERK activity. Is involved in type-1A angiotensin II receptor/AGTR1-mediated MAPK10 activity. Is involved in dopamine-stimulated AKT1 activity in the striatum by disrupting the association of AKT1 with its negative regulator PP2A. Involved in AGTR1-mediated chemotaxis. Appears to function as signaling scaffold involved in regulation of MIP-1-beta-stimulated CCR5-dependent chemotaxis. Involved in attenuation of NF-kappa-B-dependent transcription in response to GPCR or cytokine stimulation by interacting with and stabilizing CHUK. Suppresses UV-induced NF-kappa-B-dependent activation by interacting with CHUK. The function is promoted by stimulation of ADRB2 and dephosphorylation of ARRB2. Involved in p53/TP53-mediated apoptosis by regulating MDM2 and reducing the MDM2-mediated degradation of p53/TP53. May serve as nuclear messenger for GPCRs. Upon stimulation of OR1D2, may be involved in regulation of gene expression during the early processes of fertilization. Also involved in regulation of receptors other than GPCRs. Involved in endocytosis of TGFBR2 and TGFBR3 and down-regulates TGF-beta signaling such as NF-kappa-B activation. Involved in endocytosis of low-density lipoprotein receptor/LDLR. Involved in endocytosis of smoothened homolog/Smo, which also requires GRK2. Involved in endocytosis of SLC9A5. Involved in endocytosis of ENG and subsequent TGF-beta-mediated ERK activation and migration of epithelial cells. Involved in Toll-like receptor and IL-1 receptor signaling through the interaction with TRAF6 which prevents TRAF6 autoubiquitination and oligomerization required for activation of NF-kappa-B and JUN. Involved in insulin resistance by acting as insulin-induced signaling scaffold for SRC, AKT1 and INSR. Involved in regulation of inhibitory signaling of natural killer cells by recruiting PTPN6 and PTPN11 to KIR2DL1. Involved in IL8-mediated granule release in neutrophils. Involved in the internalization of the atypical chemokine receptor ACKR3. Acts as an adapter protein coupling FFAR4 receptor to specific downstream signaling pathways, as well as mediating receptor endocytosis. During the activation step of NLRP3 inflammasome, directly associates with NLRP3 leading to inhibition of pro-inflammatory cytokine release and inhibition of inflammation. This chain is Beta-arrestin-2 (ARRB2), found in Homo sapiens (Human).